Here is a 507-residue protein sequence, read N- to C-terminus: MTLWLPATGKVYLPPTPPVARVQSTDDYVERTNVFYHAMSDRLLTVGHPYYDVRSSDGLKIEVPKVSGNQYRAFRVRLPDPNKFALADMSVYNPEKERLVWACAGLEIGRGQPLGVGTTGHPLFNKLRDTENNSNYQGGSRDDRQNTSFDPKQVQMFVVGCVPCMGEHWDKAPVCASEENNQTGQCPPLELKNTVIEDGDMFDIGFGNINNKVLSTNKSDVSLDIVNEICKYPDFLTMANDVYGDACFFFARREQCYARHYFVRGGNVGDAIPDGTVNQDHKYYLPAKSDQQQYLLGNSTYFPTVSGSLVTSDAQLFNRPFWLRRAQGHNNGILWGNQMFITVADNTRNTNFSISVSTDNGEVTEYNSQTLREYLRHVEEYQLSIILQLCKVPLKAEVLTQINAMNSGILEEWQLGFVPTPDNSVHDLYRYINSKATKCPDAVVEKEKEDPFAKYTFWNVDLTEKLSLDLDQYPLGRKFIFQSGLQSRPRIVRSSVKVSKGTKRKRS.

It belongs to the papillomaviridae L1 protein family. Self-assembles into homopentamers. The capsid has an icosahedral symmetry and consists of 72 capsomers, with each capsomer being a pentamer of L1. Interacts with the minor capsid protein L2; this interaction is necessary for viral genome encapsidation. Interacts with protein E2; this interaction enhances E2-dependent replication and transcription activation.

It localises to the virion. The protein localises to the host nucleus. Its function is as follows. Forms an icosahedral capsid with a T=7 symmetry and a 50 nm diameter. The capsid is composed of 72 pentamers linked to each other by disulfide bonds and associated with L2 proteins. Binds to heparan sulfate proteoglycans on cell surface of basal layer keratinocytes to provide initial virion attachment. This binding mediates a conformational change in the virus capsid that facilitates efficient infection. The virion enters the host cell via endocytosis. During virus trafficking, L1 protein dissociates from the viral DNA and the genomic DNA is released to the host nucleus. The virion assembly takes place within the cell nucleus. Encapsulates the genomic DNA together with protein L2. The polypeptide is Major capsid protein L1 (Human papillomavirus 37).